A 501-amino-acid chain; its full sequence is MNMSALTFNSTPMITTATATDDRSRILGYNGTHSCSRLSRKKNPSIMACSTTKPLAPVVDHHGVNESGLSRIESLSQVSGVLGCQSGDEGKGKLVDMLARHFDIVARCQGGANAGHTIYNSEGKKFLLHLVPSGILNEGTTCVIGNGVVVHLPGLFKEIDGLESNGVSSQGRILVSDRAHLLFDFHQEIDGLREAELAKSFIGTTKRGIGPCYSSKVIRNGIRVSDLRHMDTFSQKLDLLLSDAAARFPDFKYGGPDMLKEEVERYKKFAERLEPFVTDTVHFINGAISQKKKILVEGSQATMLDIDFGTYPFVTSSSSVAGGICTGLGIAPRVVGDLVGVVKAYTTRVGSGPFPTEITGKVGDFLRSAGQEFGNITGRPRRCGWLDIVAVRYCCQINGFASLNLSKLDLLSDLSKIQLGVTYRLPDGSILNSFPSDLHLLEHIKVKYEVLPGWLSDISSIRKYSDLPKAAREYVERIEELVGVPIHYIGIGPGRDAFLYK.

GTP is bound by residues 87–93 (GDEGKGK) and 115–117 (GHT). Asp-88 acts as the Proton acceptor in catalysis. The Mg(2+) site is built by Asp-88 and Gly-115. IMP-binding positions include 88–91 (DEGK), 113–116 (NAGH), Thr-205, Arg-219, Gln-300, Thr-315, and Arg-379. Residue His-116 is the Proton donor of the active site. Position 375–381 (375–381 (NITGRPR)) interacts with substrate. Residues Arg-381, 407-409 (KLD), and 490-492 (GIG) each bind GTP.

It belongs to the adenylosuccinate synthetase family. In terms of assembly, homodimer. Mg(2+) is required as a cofactor.

It localises to the plastid. Its subcellular location is the chloroplast. It carries out the reaction IMP + L-aspartate + GTP = N(6)-(1,2-dicarboxyethyl)-AMP + GDP + phosphate + 2 H(+). Its pathway is purine metabolism; AMP biosynthesis via de novo pathway; AMP from IMP: step 1/2. Plays an important role in the de novo pathway and in the salvage pathway of purine nucleotide biosynthesis. Catalyzes the first committed step in the biosynthesis of AMP from IMP. The chain is Adenylosuccinate synthetase 2, chloroplastic from Capsicum frutescens (Cayenne pepper).